A 185-amino-acid chain; its full sequence is Peptidyl-tRNA hydrolase (185 aa).

Residue Tyr14 coordinates tRNA. His19 serves as the catalytic Proton acceptor. Phe64, Asn66, and Asn112 together coordinate tRNA.

It belongs to the PTH family. As to quaternary structure, monomer.

It localises to the cytoplasm. The enzyme catalyses an N-acyl-L-alpha-aminoacyl-tRNA + H2O = an N-acyl-L-amino acid + a tRNA + H(+). Its function is as follows. Hydrolyzes ribosome-free peptidyl-tRNAs (with 1 or more amino acids incorporated), which drop off the ribosome during protein synthesis, or as a result of ribosome stalling. Catalyzes the release of premature peptidyl moieties from peptidyl-tRNA molecules trapped in stalled 50S ribosomal subunits, and thus maintains levels of free tRNAs and 50S ribosomes. The chain is Peptidyl-tRNA hydrolase from Alkaliphilus oremlandii (strain OhILAs) (Clostridium oremlandii (strain OhILAs)).